A 196-amino-acid polypeptide reads, in one-letter code: Purpurin (196 aa).

The N-terminal stretch at 1 to 21 is a signal peptide; the sequence is MKYAQYVFLASIFSAVEYSLA. 3 disulfide bridges follow: C24–C182, C90–C196, and C142–C151.

The protein belongs to the calycin superfamily. Lipocalin family.

The protein resides in the secreted. It localises to the extracellular space. It is found in the extracellular matrix. The protein localises to the interphotoreceptor matrix. In terms of biological role, may be involved in the transport of retinol between the photoreceptors and the pigmented epithelium. The sequence is that of Purpurin from Gallus gallus (Chicken).